A 117-amino-acid polypeptide reads, in one-letter code: Fluoride-specific ion channel FluC 2 (117 aa).

Helical transmembrane passes span 1–21 (MISI…RSAI) and 46–66 (FLIG…AFFV). Na(+) contacts are provided by Gly71 and Thr74. Residues 95 to 115 (LFLNYSLLQFIIGFIACYIGY) form a helical membrane-spanning segment.

This sequence belongs to the fluoride channel Fluc/FEX (TC 1.A.43) family.

Its subcellular location is the cell membrane. The catalysed reaction is fluoride(in) = fluoride(out). With respect to regulation, na(+) is not transported, but it plays an essential structural role and its presence is essential for fluoride channel function. In terms of biological role, fluoride-specific ion channel. Important for reducing fluoride concentration in the cell, thus reducing its toxicity. The protein is Fluoride-specific ion channel FluC 2 of Staphylococcus aureus (strain MSSA476).